A 375-amino-acid polypeptide reads, in one-letter code: Probable serine/threonine-protein kinase PBL28 (375 aa).

T65 carries the phosphothreonine modification. A Protein kinase domain is found at 76–356 (FSDENLLGKG…MDCVKELQLI (281 aa)). Residues 82 to 90 (LGKGGFGRV) and K104 contribute to the ATP site. At Y152 the chain carries Phosphotyrosine. D205 (proton acceptor) is an active-site residue. Position 245 is a phosphothreonine (T245). Y253 carries the phosphotyrosine modification.

It belongs to the protein kinase superfamily. Ser/Thr protein kinase family.

It localises to the cell membrane. The enzyme catalyses L-seryl-[protein] + ATP = O-phospho-L-seryl-[protein] + ADP + H(+). It catalyses the reaction L-threonyl-[protein] + ATP = O-phospho-L-threonyl-[protein] + ADP + H(+). May be involved in plant defense signaling. This is Probable serine/threonine-protein kinase PBL28 from Arabidopsis thaliana (Mouse-ear cress).